Here is a 437-residue protein sequence, read N- to C-terminus: GTPase Era, mitochondrial (437 aa).

A mitochondrion-targeting transit peptide spans 1 to 43; sequence MAASSWRGAVLLRTVSGLWQAGPDAAREWMTRLPSLLGFQQRC. One can recognise an Era-type G domain in the interval 112–330; it reads RVLRVVLLGA…QYLLAQARPG (219 aa). The segment at 120–127 is G1; the sequence is GAPNAGKS. Position 120–127 (120–127) interacts with GTP; the sequence is GAPNAGKS. The G2 stretch occupies residues 146-150; sequence HTTRS. A G3 region spans residues 167–170; sequence DTPG. Residue 167-171 participates in GTP binding; the sequence is DTPGL. The residue at position 173 (Ser-173) is a Phosphoserine. Position 236–239 (236–239) interacts with GTP; sequence NKVD. The interval 236-239 is G4; it reads NKVD. Positions 264 to 296 are disordered; that stretch reads LKTKQALRSRPDTHCPSPAAQGPNPQPVRDPQQ. The interval 308–310 is G5; the sequence is LSA. The KH type-2 domain maps to 360–437; it reads LPEEVPYNVQ…QLRLSVKLLK (78 aa).

The protein belongs to the TRAFAC class TrmE-Era-EngA-EngB-Septin-like GTPase superfamily. Era GTPase family.

It is found in the mitochondrion matrix. The protein localises to the mitochondrion inner membrane. Functionally, probable GTPase that plays a role in the mitochondrial ribosomal small subunit assembly. Specifically binds the 12S mitochondrial rRNA (12S mt-rRNA) to a 33 nucleotide section delineating the 3' terminal stem-loop region. May act as a chaperone that protects the 12S mt-rRNA on the 28S mitoribosomal subunit during ribosomal small subunit assembly. In Bos taurus (Bovine), this protein is GTPase Era, mitochondrial (ERAL1).